A 379-amino-acid chain; its full sequence is Sperm microtubule associated protein 2 (379 aa).

Residues 1 to 82 (MGDSRRRSLG…EFPETLDPKE (82 aa)) form a disordered region. Basic and acidic residues-rich tracts occupy residues 19–29 (GRSEREQDGDP) and 38–50 (ESRR…RQDL). Residues 56–76 (GPEDPEEELPPEEVAGEEFPE) show a composition bias toward acidic residues. THEG repeat units lie at residues 118–137 (KARK…PKIN), 184–203 (TITV…PKRF), 222–241 (SSLE…PKIR), 258–277 (AAQM…PKAP), 290–309 (PKPH…PKAQ), and 326–345 (VTKK…PKVR). Serine 295 is modified (phosphoserine). The tract at residues 344–379 (VRKGLNEGYDRRPLASMSLPPPKASPEKCDQPRPGL) is disordered. 2 stretches are compositionally biased toward basic and acidic residues: residues 347–356 (GLNEGYDRRP) and 368–379 (SPEKCDQPRPGL).

Interacts with CCT5. In terms of tissue distribution, testis specific.

Its subcellular location is the nucleus. Its function is as follows. May be involved (but not essential) in spermatogenesis. In Homo sapiens (Human), this protein is Sperm microtubule associated protein 2.